The sequence spans 484 residues: BAHD acyltransferase DCR (484 aa).

Catalysis depends on His-168, which acts as the Proton acceptor. Positions Leu-211–Val-233 are disordered. The active-site Proton acceptor is the Asp-394. Positions Glu-452 to Val-484 are disordered. The span at His-467–Val-484 shows a compositional bias: gly residues.

Belongs to the plant acyltransferase family. In terms of tissue distribution, expressed in root caps and lateral root emerging sites, in trichomes, in epidermis in stems, sepals and anther filaments, and in pollen grains and torpedo stage seeds.

The protein localises to the cytoplasm. It is found in the cytosol. In terms of biological role, required for incorporation of 9(10),16-dihydroxy-hexadecanoic acid into cutin. This chain is BAHD acyltransferase DCR (DCR), found in Arabidopsis thaliana (Mouse-ear cress).